Reading from the N-terminus, the 520-residue chain is 2-methylcitrate dehydratase, mitochondrial (520 aa).

A mitochondrion-targeting transit peptide spans 1–37; sequence MRAFRSAANFGAASNIYRKSFTPASIASNRFVSARMS.

It belongs to the PrpD family. Monomer.

It localises to the mitochondrion. The enzyme catalyses (2S,3S)-2-methylcitrate = 2-methyl-cis-aconitate + H2O. It functions in the pathway organic acid metabolism; propanoate degradation. Its activity is regulated as follows. Several bivalent metal ions, such as nickel, copper, zinc, mercury, and lead, inhibit the activity to some extent. Inhibited by structural analogs such as citrate, cis-aconitate, isocitrate, 2-methylisocitrate, tricarballylate and fluorocitrate, but not by trans-aconitate or adipate. Its function is as follows. Component of the methylcitrate cycle that catalyzes the dehydration of 2-methylcitrate to 2-methyl-cis-aconitate. The methylcitrate cycle is a metabolic pathway for the consumption of propionic acid. In Yarrowia lipolytica (strain CLIB 122 / E 150) (Yeast), this protein is 2-methylcitrate dehydratase, mitochondrial.